Reading from the N-terminus, the 393-residue chain is Elongation factor Tu (393 aa).

The 199-residue stretch at 6 to 204 (KPHINVGTIG…ALEKIELPVR (199 aa)) folds into the tr-type G domain. The G1 stretch occupies residues 15–22 (GHVDHGKT). 15–22 (GHVDHGKT) is a binding site for GTP. Threonine 22 serves as a coordination point for Mg(2+). Residues 58–62 (GITIS) are G2. A G3 region spans residues 79-82 (DCPG). GTP is bound by residues 79-83 (DCPGH) and 134-137 (NKCD). The G4 stretch occupies residues 134-137 (NKCD). The tract at residues 172 to 174 (SAV) is G5.

This sequence belongs to the TRAFAC class translation factor GTPase superfamily. Classic translation factor GTPase family. EF-Tu/EF-1A subfamily. Monomer.

Its subcellular location is the cytoplasm. It carries out the reaction GTP + H2O = GDP + phosphate + H(+). Its function is as follows. GTP hydrolase that promotes the GTP-dependent binding of aminoacyl-tRNA to the A-site of ribosomes during protein biosynthesis. This is Elongation factor Tu from Anaplasma marginale (strain St. Maries).